A 503-amino-acid polypeptide reads, in one-letter code: AMP phosphorylase (503 aa).

AMP is bound by residues glycine 168, 194-199 (SRAITG), and serine 203. The active-site Proton donor is the aspartate 256. Serine 264 and lysine 288 together coordinate AMP.

This sequence belongs to the thymidine/pyrimidine-nucleoside phosphorylase family. Type 2 subfamily.

It carries out the reaction AMP + phosphate = alpha-D-ribose 1,5-bisphosphate + adenine. The enzyme catalyses CMP + phosphate = cytosine + alpha-D-ribose 1,5-bisphosphate. The catalysed reaction is UMP + phosphate = alpha-D-ribose 1,5-bisphosphate + uracil. In terms of biological role, catalyzes the conversion of AMP and phosphate to adenine and ribose 1,5-bisphosphate (R15P). Exhibits phosphorylase activity toward CMP and UMP in addition to AMP. Functions in an archaeal AMP degradation pathway, together with R15P isomerase and RubisCO. The polypeptide is AMP phosphorylase (Methanocella arvoryzae (strain DSM 22066 / NBRC 105507 / MRE50)).